Here is a 210-residue protein sequence, read N- to C-terminus: Large ribosomal subunit protein bL9 (210 aa).

The tract at residues 172–210 (EAAAAALEPDSEEEFEAATPPSELAAEASDEDADDAKEA) is disordered. Over residues 199–210 (ASDEDADDAKEA) the composition is skewed to acidic residues.

It belongs to the bacterial ribosomal protein bL9 family.

Binds to the 23S rRNA. This is Large ribosomal subunit protein bL9 from Sphingopyxis alaskensis (strain DSM 13593 / LMG 18877 / RB2256) (Sphingomonas alaskensis).